Here is a 360-residue protein sequence, read N- to C-terminus: Fructose import permease protein FrcC (360 aa).

9 helical membrane-spanning segments follow: residues 48–68 (AAVPLIVLVLSLIAFGVILGG), 84–106 (AIVGIVGAAQTLVILTAGIDLSV), 125–145 (GFPPALSVICGLGVGALCGYI), 155–175 (LPPFIVTLGMWQIVLASNFLY), 205–225 (AVFTYGVVVMVLLVCLLWYVL), 254–274 (MLISIYTLSGLICALAGWALI), 284–304 (AGQFANIESITAVVIGGISLF), 310–330 (IMGMLFGALIVGVFSLGLRLM), and 335–355 (QWTYLLIGLLIIIAVAIDQWI).

Belongs to the binding-protein-dependent transport system permease family. In terms of assembly, the complex is composed of two ATP-binding proteins (FrcA), two transmembrane proteins (FrcC) and a solute-binding protein (FrcB).

It is found in the cell inner membrane. Its function is as follows. Part of the high-affinity ABC transporter complex FrcBCA involved in fructose uptake. Is also a high-affinity transporter for ribose and mannose. Responsible for the translocation of the substrate across the membrane. The protein is Fructose import permease protein FrcC of Rhizobium meliloti (Ensifer meliloti).